The sequence spans 1055 residues: TNF receptor-associated factor homolog 1a (1055 aa).

Residues 1 to 56 (MSESTNEDSGAGRSSLEENSNGQRSQSEEAIAEWRSSEQVENGTPSTSPPYWDIDD) are disordered. Residues 37 to 46 (SEQVENGTPS) show a composition bias toward polar residues. An MATH domain is found at 68–191 (FGKNTWTIEK…SGCLTIKAQV (124 aa)). Disordered regions lie at residues 352 to 380 (PKKE…VERD), 431 to 590 (AESE…NGSY), 603 to 772 (FSNG…APII), and 820 to 845 (VGSS…SHPS). Residues 433–446 (SEQKGKRGASEKEK) show a composition bias toward basic and acidic residues. Residues 441–496 (ASEKEKKSKKKQAKQKKNKNKGKEMRKEDKVRTQTEEREIEKEECVRAIAESSAEK) are a coiled coil. The span at 447 to 460 (KSKKKQAKQKKNKN) shows a compositional bias: basic residues. The segment covering 461–486 (KGKEMRKEDKVRTQTEEREIEKEECV) has biased composition (basic and acidic residues). A compositionally biased stretch (low complexity) spans 502–513 (DVSDVSDSVDSS). The segment covering 524–537 (RESSPVHWEMDASE) has biased composition (basic and acidic residues). Polar residues predominate over residues 569–586 (MDDSSSTCSNDSIQSGVA). Residues 657 to 668 (QKPESPKERSPV) show a composition bias toward basic and acidic residues. 2 stretches are compositionally biased toward polar residues: residues 723 to 740 (KSPS…QLQT) and 823 to 845 (SGFT…SHPS).

As to quaternary structure, interacts with AHK3. Interacts with ATG6, SINAT1, SINAT2, SINAT5 and SINAT6.

Its subcellular location is the cytoplasm. Functionally, functions redundantly with TRAF1B in the regulation of plant immune response. Contributes to the turnover of the nucleotide-binding domain and leucine-rich repeat-containing (NB-LRR) immune receptors SNC1 and RPS2. May associate with an E3 ubiquitin-protein ligase complex, which modulates ubiquitination and subsequent degradation of NB-LRR immune sensors to maintain their homeostasis. Functions redundantly with TRAF1B in the regulation of autophagosome formation. Required for SINAT1- and SINAT2-mediated ubiquitination and destabilization of ATG6. Functions as a molecular adapter that helps to regulate autophagy by modulating ATG6 stability. The chain is TNF receptor-associated factor homolog 1a from Arabidopsis thaliana (Mouse-ear cress).